Consider the following 460-residue polypeptide: MATGKIVQVIGAVVDVEFPQDAVPRVYDALEVQNGNEKLVLEVQQQLGGGIVRTIAMGSSDGLSRGLDVKDLEHPIEVPVGKATLGRIMNVLGEPVDMKGEIGEEERWAIHRAAPSYEELSNSQELLETGIKVIDLMCPFAKGGKVGLFGGAGVGKTVNMMELIRNIAIEHSGYSVFAGVGERTREGNDFYHEMTDSNVIDKVSLVYGQMNEPPGNRLRVALTGLTMAEKFRDEGRDVLLFVDNIYRYTLAGTEVSALLGRMPSAVGYQPTLAEEMGVLQERITSTKTGSITSVQAVYVPADDLTDPSPATTFAHLDATVVLSRQIASLGIYPAVDPLDSTSRQLDPLVVGQEHYDTARGVQSILQRYQELKDIIAILGMDELSEEDKLVVARARKIQRFLSQPFFVAEVFTGSPGKYVSLKDTIRGFKGIMEGEYDHLPEQAFYMVGSIDEAVEKAKKL.

An ATP-binding site is contributed by 150–157 (GGAGVGKT).

This sequence belongs to the ATPase alpha/beta chains family. F-type ATPases have 2 components, CF(1) - the catalytic core - and CF(0) - the membrane proton channel. CF(1) has five subunits: alpha(3), beta(3), gamma(1), delta(1), epsilon(1). CF(0) has three main subunits: a(1), b(2) and c(9-12). The alpha and beta chains form an alternating ring which encloses part of the gamma chain. CF(1) is attached to CF(0) by a central stalk formed by the gamma and epsilon chains, while a peripheral stalk is formed by the delta and b chains.

The protein resides in the cell inner membrane. It catalyses the reaction ATP + H2O + 4 H(+)(in) = ADP + phosphate + 5 H(+)(out). Its function is as follows. Produces ATP from ADP in the presence of a proton gradient across the membrane. The catalytic sites are hosted primarily by the beta subunits. The chain is ATP synthase subunit beta from Salmonella gallinarum (strain 287/91 / NCTC 13346).